We begin with the raw amino-acid sequence, 300 residues long: Probable phytol kinase, chloroplastic (300 aa).

The N-terminal 36 residues, 1-36 (MAAARPALPSSPTSLLLARSTSAPDLAARRPRRWLV), are a transit peptide targeting the chloroplast. 7 helical membrane-spanning segments follow: residues 60–78 (LLRD…YSLV), 98–118 (VVHV…SNST), 122–142 (FFAA…GLGF), 168–188 (YVIV…IGIV), 227–247 (FISG…LGYI), 254–274 (ALGK…IPVT), and 276–296 (VVDD…LLFG).

Belongs to the polyprenol kinase family.

The protein localises to the plastid. It is found in the chloroplast membrane. It catalyses the reaction phytol + CTP = phytyl phosphate + CDP + H(+). Its pathway is cofactor biosynthesis; tocopherol biosynthesis. In terms of biological role, involved in the activation and reutilization of phytol from chlorophyll degradation in plant metabolism, including tocopherol biosynthesis. Catalyzes the conversion of phytol to phytol monophosphate (PMP). This chain is Probable phytol kinase, chloroplastic, found in Triticum aestivum (Wheat).